The following is a 366-amino-acid chain: MIKILADDRIPFVSELFGDFGELILKPGAHIQNRDLLAVNALLTRSITSVDSALLEGTAVEFVGSATAGFDHIDSTWLKKQSIHWAYAPGANATAVAEYVLHCVAYLHKKNLLPRKSATAAIIGVGHVGCVVSDRLRKIGFTVFHNDPPRAQLEKDFISVPLASLANVDLVCLHTPLVKTGNFPTYHLIDNRFLKMLKPGSVLLNAGRGAVIDNNALLQCDHVITCLDVWENEPTVNLQLLEKTTIATPHIAGYSKQAKLRATLMIYDAFLKYFHLSDTRRFSELQQLQETMTLNIQDGRNAEDILLTLFDPGRESQRMRETLAENPDQFEYLRRHFPLRNEFSAIQLTPTPSALLRKELDDWGFK.

Substrate-binding residues include Ser46 and Thr67. 2 residues coordinate NAD(+): Asp147 and Thr175. Arg208 is an active-site residue. Position 228 (Asp228) interacts with NAD(+). Residue Glu233 is part of the active site. The active-site Proton donor is the His250. Gly253 is an NAD(+) binding site. Tyr254 provides a ligand contact to substrate.

The protein belongs to the D-isomer specific 2-hydroxyacid dehydrogenase family. PdxB subfamily. In terms of assembly, homodimer.

Its subcellular location is the cytoplasm. It carries out the reaction 4-phospho-D-erythronate + NAD(+) = (R)-3-hydroxy-2-oxo-4-phosphooxybutanoate + NADH + H(+). Its pathway is cofactor biosynthesis; pyridoxine 5'-phosphate biosynthesis; pyridoxine 5'-phosphate from D-erythrose 4-phosphate: step 2/5. Catalyzes the oxidation of erythronate-4-phosphate to 3-hydroxy-2-oxo-4-phosphonooxybutanoate. The sequence is that of Erythronate-4-phosphate dehydrogenase from Coxiella burnetii (strain RSA 331 / Henzerling II).